Consider the following 382-residue polypeptide: V-set and immunoglobulin domain-containing protein 1 (382 aa).

The signal sequence occupies residues 1–21 (MGLTFWKVFLILNCLAGQVNG). Residues 22-133 (VQVTIPDSFV…FFGKNQGTIS (112 aa)) form the Ig-like V-type domain. The Extracellular portion of the chain corresponds to 22–234 (VQVTIPDSFV…DLTTPYPGIG (213 aa)). Residue N32 is glycosylated (N-linked (GlcNAc...) asparagine). Intrachain disulfides connect C43/C116 and C161/C211. Residues 140–227 (PSKPFCSIQG…GNSSCEIDLT (88 aa)) enclose the Ig-like C2-type domain. Residues N200 and N219 are each glycosylated (N-linked (GlcNAc...) asparagine). Residues 235-255 (IIVGAFVGTLIGVIIIISVVW) traverse the membrane as a helical segment. Over 256 to 382 (FVRRKVKAKG…FCDEEKVIKP (127 aa)) the chain is Cytoplasmic. The segment at 266 to 382 (KERKRNSKTT…FCDEEKVIKP (117 aa)) is disordered. Residues 273 to 285 (KTTTELEPMTKIN) are compositionally biased toward polar residues. The span at 286–298 (QRTEGETMPREDA) shows a compositional bias: basic and acidic residues. The segment covering 327 to 341 (EPEPALQPTVEPPSG) has biased composition (pro residues).

The protein localises to the membrane. The chain is V-set and immunoglobulin domain-containing protein 1 (VSIG1) from Bos taurus (Bovine).